The following is a 254-amino-acid chain: tRNA (guanine-N(1)-)-methyltransferase (254 aa).

S-adenosyl-L-methionine contacts are provided by residues glycine 117 and 136–141 (LGDFVL).

The protein belongs to the RNA methyltransferase TrmD family. Homodimer.

It localises to the cytoplasm. It carries out the reaction guanosine(37) in tRNA + S-adenosyl-L-methionine = N(1)-methylguanosine(37) in tRNA + S-adenosyl-L-homocysteine + H(+). Its function is as follows. Specifically methylates guanosine-37 in various tRNAs. The polypeptide is tRNA (guanine-N(1)-)-methyltransferase (Levilactobacillus brevis (strain ATCC 367 / BCRC 12310 / CIP 105137 / JCM 1170 / LMG 11437 / NCIMB 947 / NCTC 947) (Lactobacillus brevis)).